Reading from the N-terminus, the 197-residue chain is MDMTSRMTSHFRDAMALCEQSMQALSEPLAGAVELLFAALANNGRILACGNGGSAADAQHFVAELVGRFERDRLPLAGIALNTDTSILTAVGNDYGFDEIYERQVNALGQPGDVLVAISTSGNSPNVVRAMEAARDREMHVIALTGKGGGVMGELITPHDVHLCVPHDRTMRIQEIHILLLHALCDGIDALLLGDTE.

The 162-residue stretch at 36–197 folds into the SIS domain; the sequence is LFAALANNGR…IDALLLGDTE (162 aa). 51–53 lines the substrate pocket; the sequence is NGG. Residues His60 and Glu64 each contribute to the Zn(2+) site. Residues Glu64, 93 to 94, 119 to 121, Ser124, and Gln174 each bind substrate; these read ND and STS. Residues Gln174 and His182 each coordinate Zn(2+).

It belongs to the SIS family. GmhA subfamily. As to quaternary structure, homotetramer. Requires Zn(2+) as cofactor.

The protein resides in the cytoplasm. It carries out the reaction 2 D-sedoheptulose 7-phosphate = D-glycero-alpha-D-manno-heptose 7-phosphate + D-glycero-beta-D-manno-heptose 7-phosphate. Its pathway is carbohydrate biosynthesis; D-glycero-D-manno-heptose 7-phosphate biosynthesis; D-glycero-alpha-D-manno-heptose 7-phosphate and D-glycero-beta-D-manno-heptose 7-phosphate from sedoheptulose 7-phosphate: step 1/1. Catalyzes the isomerization of sedoheptulose 7-phosphate in D-glycero-D-manno-heptose 7-phosphate. This Bordetella avium (strain 197N) protein is Phosphoheptose isomerase.